A 226-amino-acid chain; its full sequence is Lipoprotein-releasing system ATP-binding protein LolD (226 aa).

The 221-residue stretch at 5-225 folds into the ABC transporter domain; it reads LELVEIERHF…TLKEKKIVEL (221 aa). 41–48 is an ATP binding site; it reads APSGAGKS.

This sequence belongs to the ABC transporter superfamily. Lipoprotein translocase (TC 3.A.1.125) family. The complex is composed of two ATP-binding proteins (LolD) and two transmembrane proteins (LolC and LolE).

It localises to the cell inner membrane. Functionally, part of the ABC transporter complex LolCDE involved in the translocation of mature outer membrane-directed lipoproteins, from the inner membrane to the periplasmic chaperone, LolA. Responsible for the formation of the LolA-lipoprotein complex in an ATP-dependent manner. The chain is Lipoprotein-releasing system ATP-binding protein LolD from Bartonella quintana (strain Toulouse) (Rochalimaea quintana).